A 153-amino-acid chain; its full sequence is MTHDNKLQVEAIRRGTVIDHIPAQVGFKLLSLFKLTETDQRITIGLNLPSGEMGRKDLIKIENTFLTDEQVNQLALYAPQATVNRIDDYEVVGKSKPSLPDRIENVLVCPNGNCISRIEPVSSSFAVKTRGDAVQLKCKYCEKEFARHVVLAD.

Residues Cys-109, Cys-114, Cys-138, and Cys-141 each coordinate Zn(2+).

Belongs to the PyrI family. Contains catalytic and regulatory chains. Zn(2+) is required as a cofactor.

Its function is as follows. Involved in allosteric regulation of aspartate carbamoyltransferase. The sequence is that of Aspartate carbamoyltransferase regulatory chain from Cronobacter sakazakii (strain ATCC BAA-894) (Enterobacter sakazakii).